Reading from the N-terminus, the 460-residue chain is Elongation factor 1-alpha (460 aa).

Glycine 2 bears the N,N,N-trimethylglycine mark. The residue at position 3 (lysine 3) is an N6,N6-dimethyllysine; alternate. Position 3 is an N6-methyllysine; alternate (lysine 3). Positions 6–241 constitute a tr-type G domain; the sequence is KTHINVVVIG…DAIEPPKRPT (236 aa). The G1 stretch occupies residues 15–22; sequence GHVDSGKS. GTP is bound at residue 15–22; it reads GHVDSGKS. Lysine 31 is subject to N6-methyllysine. Positions 71–75 are G2; the sequence is GITID. Lysine 80 carries the post-translational modification N6,N6,N6-trimethyllysine. The tract at residues 92–95 is G3; it reads DAPG. Residues 92-96 and 154-157 contribute to the GTP site; these read DAPGH and NKMD. The interval 154–157 is G4; it reads NKMD. Residues 193–195 form a G5 region; sequence SGF. Lysine 317 is modified (N6,N6-dimethyllysine; alternate). The residue at position 317 (lysine 317) is an N6-methyllysine; alternate. Residue lysine 391 is modified to N6-methyllysine.

The protein belongs to the TRAFAC class translation factor GTPase superfamily. Classic translation factor GTPase family. EF-Tu/EF-1A subfamily.

The protein localises to the cytoplasm. Its function is as follows. This protein promotes the GTP-dependent binding of aminoacyl-tRNA to the A-site of ribosomes during protein biosynthesis. This is Elongation factor 1-alpha (tef-1) from Neurospora crassa (strain ATCC 24698 / 74-OR23-1A / CBS 708.71 / DSM 1257 / FGSC 987).